The chain runs to 506 residues: Zinc finger and SCAN domain containing protein 4D (506 aa).

The region spanning 37 to 119 is the SCAN box domain; that stretch reads SAQLNFSPSN…RFMESLTDEC (83 aa). A disordered region spans residues 238–264; sequence SQGNSSHHVDFRSAPTPADVPMEEQPK. C2H2-type zinc fingers lie at residues 395-417, 424-446, 452-474, and 480-503; these read FKCEECSRMFKHARSLSSHQRTH, LLCVTCQKMFKRVSDRRTHEIIH, FKCSTCEKSFSHKTNLKSHEMIH, and YVCSLCSRRFRQSSTYHRHLRNYH.

Highly expressed at the 2-cell stage but its expression is rapidly turned off.

Its subcellular location is the nucleus. It localises to the chromosome. The protein localises to the telomere. Transcription factor required to regulate early development. Binds telomeres and plays a key role in genomic stability by regulating telomere elongation. Acts as an activator of spontaneous telomere sister chromatid exchange (T-SCE) and telomere elongation. The chain is Zinc finger and SCAN domain containing protein 4D (Zscan4d) from Mus musculus (Mouse).